A 608-amino-acid chain; its full sequence is Malonate--CoA ligase (608 aa).

It belongs to the ATP-dependent AMP-binding enzyme family. In terms of tissue distribution, expressed in flowers.

It is found in the cytoplasm. The protein resides in the nucleus. The catalysed reaction is malonate + ATP + CoA = malonyl-CoA + AMP + diphosphate. Malonate--CoA ligase that catalyzes the formation of malonyl-CoA directly from malonate and CoA. May be required for the detoxification of malonate. The polypeptide is Malonate--CoA ligase (AAE13) (Arabidopsis thaliana (Mouse-ear cress)).